A 739-amino-acid chain; its full sequence is Prestin (739 aa).

The Cytoplasmic segment spans residues 1–76 (MEHVTVSEEP…PILTWLPSYP (76 aa)). A helical membrane pass occupies residues 77 to 106 (LKEYLFGDIVSGISTGVMQLPQGLAYAMLA). Residues 107–109 (AVP) lie on the Extracellular side of the membrane. A helical membrane pass occupies residues 110 to 127 (PVFGLYSSFYPVLLYTFF). Residues 128-138 (GTSKHISIGTF) lie on the Cytoplasmic side of the membrane. The chain crosses the membrane as a helical span at residues 139–152 (AVISLMIGGVAVRE). The Extracellular segment spans residues 153–169 (APDSMFMVNGTNSSLVV). 2 N-linked (GlcNAc...) asparagine glycosylation sites follow: Asn-161 and Asn-164. A helical transmembrane segment spans residues 170–199 (NIEARDSRRVEVVVALTTLVGIIQFVLGLL). The Cytoplasmic segment spans residues 200–209 (RFGFLAIYLT). Residues 210-233 (EPLVRGFTTAAAVHVSVSQLKYLL) traverse the membrane as a helical segment. At 234 to 244 (GVKTARFNGPL) the chain is on the extracellular side. An intramembrane region (helical) is located at residues 245 to 256 (SVVYSLDAVLRN). The Extracellular segment spans residues 257-261 (IADTN). Residues 262–285 (IVTLIIGLGCTVFLYIIKQLNERF) form a helical membrane-spanning segment. Topologically, residues 286–294 (KKKLLIPIP) are cytoplasmic. The chain crosses the membrane as a helical span at residues 295–310 (GEIIVVIVSTGISYGM). Residues 311–335 (LMSENYGVDVVGKIPTGLLPPKVPD) are Extracellular-facing. A helical membrane pass occupies residues 336–370 (FSVFPNLFADAVPIAVVGFSITISLAKTFALKYGY). Over 371 to 373 (SVD) the chain is Cytoplasmic. A helical transmembrane segment spans residues 374–391 (GNQELIALGLCNFVSSFF). The Extracellular portion of the chain corresponds to 392-399 (HTFVVTAS). The chain crosses the membrane as a helical span at residues 400–409 (MSRSLVQEST). Ser-401 provides a ligand contact to salicylate. The Cytoplasmic segment spans residues 410–413 (GGHT). Residues 414–435 (EIAGLLASLLVLLVVVAIGFVF) traverse the membrane as a helical segment. Over 436-439 (QPLP) the chain is Extracellular. A helical membrane pass occupies residues 440–467 (TTVLAAIIMVNLLGMFKQTRDIPVLWRK). A topological domain (cytoplasmic) is located at residue Ser-468. Residues 469–484 (KIELAIWLVSFFASVL) form a helical membrane-spanning segment. At 485-486 (LG) the chain is on the extracellular side. Residues 487–507 (LDYGLAVAMAFAILTVIYRTQ) form a helical membrane-spanning segment. Residues 508-731 (RPKNVVLGQI…AVLQCKRWRD (224 aa)) form an extended region for STAS domain region. At 508 to 739 (RPKNVVLGQI…RDLPVHPNIH (232 aa)) the chain is on the cytoplasmic side. Positions 528–726 (EYEEAEECSG…PTIHDAVLQC (199 aa)) constitute an STAS domain.

The protein belongs to the SLC26A/SulP transporter (TC 2.A.53) family. Homodimer. Interacts (via STAS domain) with CALM; this interaction is calcium-dependent. In terms of tissue distribution, expressed in hair cells of the auditory organs.

The protein localises to the cell membrane. It carries out the reaction oxalate(in) + chloride(out) = oxalate(out) + chloride(in). The catalysed reaction is sulfate(out) + chloride(in) = sulfate(in) + chloride(out). Sulfate/chloride antiport activity is inhibited by salicylate; this inhibition is reversible. In terms of biological role, electrogenic antiporter that exchanges sulfate or oxalate for chloride ion in a strictly coupled manner with a 1:1 stoichiometry. Adopts a dynamic conformation, which alternates between the exposure of the central binding site to the extra- and intracellular solutions leading to an inward-to-outward conformational transition during the transport cycle. Generates voltage-dependent charge movements resembling to the non-linear capacitance (NLC) of the cell membrane, but which are not associated to electromotile activity. The polypeptide is Prestin (Danio rerio (Zebrafish)).